Reading from the N-terminus, the 465-residue chain is DEAD-box ATP-dependent RNA helicase 55 (465 aa).

Positions 17-45 (FSELKPPLSEDIIEALDRSGFEVCTPVQA) match the Q motif motif. The region spanning 48-219 (IPFLCSHKDV…KAGLRNPYLK (172 aa)) is the Helicase ATP-binding domain. 61–68 (AATGSGKT) is a binding site for ATP. A DEAD box motif is present at residues 167-170 (DEAD). The Helicase C-terminal domain occupies 228–422 (QLVHLLIENK…KDKLQQEKRG (195 aa)). The tract at residues 413-465 (KDKLQQEKRGKRKKSSKEAVDDSNKASRKRKLTGRQRQTIQTAQDEEEMNLRL) is disordered. A compositionally biased stretch (basic and acidic residues) spans 428–437 (SKEAVDDSNK). Residues 456–465 (QDEEEMNLRL) are compositionally biased toward acidic residues.

This sequence belongs to the DEAD box helicase family. DDX55/SPB4 subfamily.

The catalysed reaction is ATP + H2O = ADP + phosphate + H(+). This is DEAD-box ATP-dependent RNA helicase 55 (RH55) from Arabidopsis thaliana (Mouse-ear cress).